The primary structure comprises 129 residues: Follitropin subunit beta (129 aa).

A signal peptide spans 1–18 (MKTLQFFFLFCCWKAICC). 6 cysteine pairs are disulfide-bonded: cysteine 21–cysteine 69, cysteine 35–cysteine 84, cysteine 38–cysteine 122, cysteine 46–cysteine 100, cysteine 50–cysteine 102, and cysteine 105–cysteine 112. 2 N-linked (GlcNAc...) asparagine glycosylation sites follow: asparagine 25 and asparagine 42.

The protein belongs to the glycoprotein hormones subunit beta family. Heterodimer. The active follitropin is a heterodimer composed of an alpha chain/CGA shared with other hormones and a unique beta chain/FSHB shown here.

The protein localises to the secreted. Functionally, together with the alpha chain CGA constitutes follitropin, the follicle-stimulating hormone, and provides its biological specificity to the hormone heterodimer. Binds FSHR, a G protein-coupled receptor, on target cells to activate downstream signaling pathways. Follitropin is involved in follicle development and spermatogenesis in reproductive organs. The polypeptide is Follitropin subunit beta (FSHB) (Homo sapiens (Human)).